The sequence spans 397 residues: Mycinamicin IV hydroxylase/epoxidase (397 aa).

The tract at residues 63 to 86 (RGPSMTRDEPRTRPEMVKGGLLSM) is disordered. Basic and acidic residues predominate over residues 68–78 (TRDEPRTRPEM). Glycine 81 is a substrate binding site. Heme is bound by residues histidine 91, arginine 95, arginine 288, histidine 344, and cysteine 346.

The protein belongs to the cytochrome P450 family. Heme serves as cofactor.

Its pathway is antibiotic biosynthesis; mycinamicin biosynthesis. Involved in the biosynthesis of mycinamicin, a 16-membered macrolide antibiotic. Catalyzes consecutive hydroxylation (at C14) and epoxidation (at C12-C13) reactions with mycinamicin IV as initial substrate, leading to mycinamicin II. These reactions require prior dimethylation of 6-deoxyallose to mycinose for effective conversion by the dual function MycG enzyme. This Micromonospora griseorubida protein is Mycinamicin IV hydroxylase/epoxidase.